A 464-amino-acid polypeptide reads, in one-letter code: Protein FAM90A18 (464 aa).

Disordered stretches follow at residues 1 to 42 (MMAR…DPRL), 70 to 387 (PATL…ASHD), and 415 to 437 (HSPE…SEAP). Basic and acidic residues-rich tracts occupy residues 74–89 (GKKE…KPRV) and 97–114 (NKDK…DPQR). Residues 180–197 (LASLSPLRKASLSSSSSL) are compositionally biased toward low complexity.

This sequence belongs to the FAM90 family.

This Homo sapiens (Human) protein is Protein FAM90A18.